A 521-amino-acid chain; its full sequence is Cytochrome P450 monooxygenase sdnF (521 aa).

A helical membrane pass occupies residues 19-39 (YLGLLLSGTVLYTVYKLIIAI). N-linked (GlcNAc...) asparagine glycans are attached at residues N178, N186, N191, N309, and N416. Residue C460 participates in heme binding.

This sequence belongs to the cytochrome P450 family. Heme serves as cofactor.

Its subcellular location is the membrane. It participates in antibiotic biosynthesis. Functionally, cytochrome P450 monooxygenase; part of the gene cluster that mediates the biosynthesis of sordarin and hypoxysordarin, glycoside antibiotics with a unique tetracyclic diterpene aglycone structure. First, the geranylgeranyl diphosphate synthase sdnC constructs GGDP from farnesyl diphosphate and isopentenyl diphosphate. The diterpene cyclase sdnA then catalyzes the cyclization of GGDP to afford cycloaraneosene. Cycloaraneosene is then hydroxylated four times by the putative cytochrome P450 monooxygenases sdnB, sdnE, sdnF and sdnH to give a hydroxylated cycloaraneosene derivative such as cycloaraneosene-8,9,13,19-tetraol. Although the order of the hydroxylations is unclear, at least C8, C9 and C13 of the cycloaraneosene skeleton are hydroxylated before the sordaricin formation. Dehydration of the 13-hydroxy group of the hydroxylated cycloaraneosene derivative might be catalyzed by an unassigned hypothetical protein such as sdnG and sdnP to construct the cyclopentadiene moiety. The FAD-dependent oxidoreductase sdnN is proposed to catalyze the oxidation at C9 of the hydroxylated cycloaraneosene derivative and also catalyze the Baeyer-Villiger oxidation to give the lactone intermediate. The presumed lactone intermediate would be hydrolyzed to give an acrolein moiety and a carboxylate moiety. Then, [4+2]cycloaddition would occur between the acrolein moiety and the cyclopentadiene moiety to give sordaricin. SdnN might also be involved in the [4+2]cycloaddition after the hypothesized oxidation to accommodate the oxidized product and prompt the [4+2]cycloaddition. GDP-6-deoxy-D-altrose may be biosynthesized from GDP-D-mannose by the putative GDP-mannose-4,6-dehydratase sdnI and the short-chain dehydrogenase sdnK. The glycosyltransferase sdnJ catalyzes the attachment of 6-deoxy-D-altrose onto the 19-hydroxy group of sordaricin to give 4'-O-demethylsordarin. The methyltransferase sdnD would complete the biosynthesis of sordarin. Sordarin can be further modified into hypoxysordarin. The unique acyl chain at the 3'-hydroxy group of hypoxysordarin would be constructed by an iterative type I PKS sdnO and the trans-acting polyketide methyltransferase sdnL. SdnL would be responsible for the introduction of an alpha-methyl group of the polyketide chain. Alternatively, the beta-lactamase-like protein sdnR might be responsible for the cleavage and transfer of the polyketide chain from the PKS sdnO to sordarin. Two putative cytochrome P450 monooxygenases, sdnQ and sdnT, might catalyze the epoxidations of the polyketide chain to complete the biosynthesis of hypoxysordarin. Transcriptional regulators sdnM and sdnS are presumably encoded for the transcriptional regulation of the expression of the sdn gene cluster. The sequence is that of Cytochrome P450 monooxygenase sdnF from Sordaria araneosa (Pleurage araneosa).